We begin with the raw amino-acid sequence, 505 residues long: MNKKLNDVLLKLDQDLIKYVKGSLDLEISGVTYSSKLVLPGFVFFALPGIRFDGHDFIEMAIQNGSNVIVHSRDMDFYSPNVTYIKVDDFSIRKFMSNFSNVFYDEPSKKLKVIGVTGTDGKSSVCYYIYLLLKKKGVKVGFISTVFFDDGSGSLIKNPYRQSTPESTEIHAFLSNMVKNGVQYAILESTSHGLDLKTARLIDVNYFAAVFTNIGHEHLEFHGTIQNYLNVKLGLFRSVSDDAGFGVINLDDFYSSEFKNAVKKSFTYSLKSSQADFFVSFIDEKIDSTRFEFYYKGVKYFANVNLLGSFNVENVMAALILVSQILNSDIQDIVDKLVCIKSLDGRMDSINLGQNFSVIIDYAHTPGAFSKLFPIFKRFATNRLISVFGSAGERDVAKRFLQGQISDIYSDLILLCDEDPRGENSMCIIKDIAKGIVNKVVNQDLFFIPDRKQAIEKAISLARAGDLVVVLGKGHESSIIYKNREVFWNEQEVVKNAILSLEKEK.

Ser35 provides a ligand contact to UDP-N-acetyl-alpha-D-muramoyl-L-alanyl-D-glutamate. Gly118–Ser124 provides a ligand contact to ATP. UDP-N-acetyl-alpha-D-muramoyl-L-alanyl-D-glutamate is bound by residues Ser163–Thr164, Thr190, and Arg200. Position 232 is an N6-carboxylysine (Lys232).

This sequence belongs to the MurCDEF family. MurE subfamily. Post-translationally, carboxylation is probably crucial for Mg(2+) binding and, consequently, for the gamma-phosphate positioning of ATP.

The protein localises to the cytoplasm. The protein operates within cell wall biogenesis; peptidoglycan biosynthesis. Its function is as follows. Catalyzes the addition of an amino acid to the nucleotide precursor UDP-N-acetylmuramoyl-L-alanyl-D-glutamate (UMAG) in the biosynthesis of bacterial cell-wall peptidoglycan. The polypeptide is UDP-N-acetylmuramyl-tripeptide synthetase (Borreliella afzelii (strain PKo) (Borrelia afzelii)).